The primary structure comprises 70 residues: Small ribosomal subunit protein bS21 (70 aa).

The protein belongs to the bacterial ribosomal protein bS21 family.

In Delftia acidovorans (strain DSM 14801 / SPH-1), this protein is Small ribosomal subunit protein bS21.